A 460-amino-acid polypeptide reads, in one-letter code: Putative protein p41 (460 aa).

One can recognise a Helicase ATP-binding domain in the interval 14–186; that stretch reads INHLLDIKRS…WGQAWFVDQG (173 aa).

This chain is Putative protein p41 (41), found in Escherichia coli (Bacteriophage APSE-1).